A 233-amino-acid chain; its full sequence is Probable transglycosylase IsaA (233 aa).

The first 29 residues, 1 to 29 (MKKTIMASSLAVALGVTGYAASTGHEAHA), serve as a signal peptide directing secretion.

The protein belongs to the transglycosylase family. IsaA subfamily.

The protein resides in the secreted. In terms of biological role, is able to cleave peptidoglycan. The chain is Probable transglycosylase IsaA (isaA) from Staphylococcus aureus (strain bovine RF122 / ET3-1).